Reading from the N-terminus, the 124-residue chain is uncharacterized protein (124 aa).

The helical transmembrane segment at 2-22 (AIIIAIIAAVIVIAALITFNV) threads the bilayer. The interval 24 to 124 (NASPGPEKQE…ALLSMKNKKK (101 aa)) is disordered. Composition is skewed to basic and acidic residues over residues 30–58 (EKQE…RAAE), 67–81 (DSPK…DDIY), and 89–113 (KHSD…RSYR).

The protein localises to the membrane. This is an uncharacterized protein from Bacillus subtilis (strain 168).